The primary structure comprises 245 residues: 1-(5-phosphoribosyl)-5-[(5-phosphoribosylamino)methylideneamino] imidazole-4-carboxamide isomerase (245 aa).

The Proton acceptor role is filled by Asp11. Asp132 (proton donor) is an active-site residue.

This sequence belongs to the HisA/HisF family.

The protein resides in the cytoplasm. It catalyses the reaction 1-(5-phospho-beta-D-ribosyl)-5-[(5-phospho-beta-D-ribosylamino)methylideneamino]imidazole-4-carboxamide = 5-[(5-phospho-1-deoxy-D-ribulos-1-ylimino)methylamino]-1-(5-phospho-beta-D-ribosyl)imidazole-4-carboxamide. The protein operates within amino-acid biosynthesis; L-histidine biosynthesis; L-histidine from 5-phospho-alpha-D-ribose 1-diphosphate: step 4/9. This is 1-(5-phosphoribosyl)-5-[(5-phosphoribosylamino)methylideneamino] imidazole-4-carboxamide isomerase from Bacillus velezensis (strain DSM 23117 / BGSC 10A6 / LMG 26770 / FZB42) (Bacillus amyloliquefaciens subsp. plantarum).